The primary structure comprises 356 residues: D-xylulose reductase (356 aa).

3 residues coordinate Zn(2+): cysteine 44, histidine 69, and glutamate 155. 179–184 (GAGPIG) serves as a coordination point for NAD(+).

It belongs to the zinc-containing alcohol dehydrogenase family. Requires Zn(2+) as cofactor.

The enzyme catalyses xylitol + NAD(+) = D-xylulose + NADH + H(+). Its pathway is carbohydrate degradation; L-arabinose degradation via L-arabinitol; D-xylulose 5-phosphate from L-arabinose (fungal route): step 4/5. The sequence is that of D-xylulose reductase (XYL2) from Saccharomyces cerevisiae (strain ATCC 204508 / S288c) (Baker's yeast).